Consider the following 72-residue polypeptide: Translation initiation factor IF-1 (72 aa).

The 71-residue stretch at 2–72 (AKEDCIEMQG…NKGRIIFRSR (71 aa)) folds into the S1-like domain.

It belongs to the IF-1 family. As to quaternary structure, component of the 30S ribosomal translation pre-initiation complex which assembles on the 30S ribosome in the order IF-2 and IF-3, IF-1 and N-formylmethionyl-tRNA(fMet); mRNA recruitment can occur at any time during PIC assembly.

It is found in the cytoplasm. Its function is as follows. One of the essential components for the initiation of protein synthesis. Stabilizes the binding of IF-2 and IF-3 on the 30S subunit to which N-formylmethionyl-tRNA(fMet) subsequently binds. Helps modulate mRNA selection, yielding the 30S pre-initiation complex (PIC). Upon addition of the 50S ribosomal subunit IF-1, IF-2 and IF-3 are released leaving the mature 70S translation initiation complex. The sequence is that of Translation initiation factor IF-1 from Pasteurella multocida (strain Pm70).